A 388-amino-acid polypeptide reads, in one-letter code: Chorismate synthase (388 aa).

R39 and R45 together coordinate NADP(+). FMN contacts are provided by residues 130 to 132, 251 to 252, G296, 311 to 315, and R337; these read RSS, NA, and KPIPT.

It belongs to the chorismate synthase family. In terms of assembly, homotetramer. FMNH2 serves as cofactor.

The catalysed reaction is 5-O-(1-carboxyvinyl)-3-phosphoshikimate = chorismate + phosphate. It participates in metabolic intermediate biosynthesis; chorismate biosynthesis; chorismate from D-erythrose 4-phosphate and phosphoenolpyruvate: step 7/7. Catalyzes the anti-1,4-elimination of the C-3 phosphate and the C-6 proR hydrogen from 5-enolpyruvylshikimate-3-phosphate (EPSP) to yield chorismate, which is the branch point compound that serves as the starting substrate for the three terminal pathways of aromatic amino acid biosynthesis. This reaction introduces a second double bond into the aromatic ring system. The protein is Chorismate synthase of Streptococcus pyogenes serotype M28 (strain MGAS6180).